The chain runs to 250 residues: UPF0259 membrane protein SG1383 (250 aa).

Helical transmembrane passes span 20 to 40, 86 to 106, 121 to 141, 146 to 166, 191 to 211, and 219 to 239; these read FASI…LGHA, AGTL…LTMI, IGLS…TTLL, LLLI…APVI, LLAP…LLAT, and LVAV…LLIY.

Belongs to the UPF0259 family.

The protein localises to the cell inner membrane. The polypeptide is UPF0259 membrane protein SG1383 (Sodalis glossinidius (strain morsitans)).